A 359-amino-acid chain; its full sequence is Ornithine cyclodeaminase (359 aa).

The L-ornithine site is built by Arg-53 and Lys-77. Residues Thr-92, Arg-120, Ala-147–Gln-148, Asp-169, Thr-209, Val-232–Asp-235, Lys-239, and Ser-300 each bind NAD(+). Position 120 (Arg-120) interacts with L-ornithine. Asp-235 is an L-ornithine binding site. The active-site Proton donor/acceptor is the Asp-235. Val-301 is an L-ornithine binding site.

The protein belongs to the ornithine cyclodeaminase/mu-crystallin family. It depends on NAD(+) as a cofactor.

It catalyses the reaction L-ornithine = L-proline + NH4(+). Its pathway is amino-acid biosynthesis; L-proline biosynthesis; L-proline from L-ornithine: step 1/1. Catalyzes the conversion of L-ornithine into L-proline with release of ammonia. This is Ornithine cyclodeaminase from Brucella abortus biovar 1 (strain 9-941).